A 646-amino-acid chain; its full sequence is WW domain-containing adapter protein with coiled-coil (646 aa).

A disordered region spans residues 1–138 (MVMYARKQQR…YDSADDWSEH (138 aa)). Residues 23–37 (QPFQALKYSSKSHPS) show a composition bias toward polar residues. Over residues 38–50 (SGDHRHEKMRDAA) the composition is skewed to basic and acidic residues. Ser53 is modified (phosphoserine). Polar residues predominate over residues 61 to 75 (RSNSPENKYSDSTGH). Over residues 103 to 122 (NHSALHSSNSHSSNPSNNPS) the composition is skewed to low complexity. The region spanning 129–162 (YDSADDWSEHISSSGKKYYYNCRTEVSQWEKPKE) is the WW domain. 2 positions are modified to phosphoserine: Ser131 and Ser142. Basic and acidic residues-rich tracts occupy residues 158–174 (EKPKEWLEREQRQKEAN) and 182–191 (PKDRDYRREV). 2 disordered regions span residues 158–352 (EKPK…PQST) and 428–541 (TQAQ…TATV). Over residues 211–225 (DASSLLPQNILSQTS) the composition is skewed to polar residues. Ser225 carries the post-translational modification Phosphoserine. A compositionally biased stretch (basic and acidic residues) spans 226–239 (RHNDKDYRLPRAET). The segment covering 252–267 (PVVHPTATPSTVPSSP) has biased composition (low complexity). A compositionally biased stretch (polar residues) spans 284–300 (GASTLSKLPTPTASLPA). Position 293 is a phosphothreonine (Thr293). The residue at position 302 (Lys302) is an N6-acetyllysine. Over residues 316–331 (SHSCTTPSTSSASGLN) the composition is skewed to polar residues. Residues 332 to 351 (PTSAPPTSASAVPVSPVPQS) show a composition bias toward low complexity. A compositionally biased stretch (polar residues) spans 428 to 463 (TQAQPSNQSPMSLTSDASSPRSYVSPRISTPQTNTV). Phosphoserine is present on Ser446. Phosphothreonine is present on Thr471. A compositionally biased stretch (polar residues) spans 490 to 503 (VSHSATQQPVTADK). Phosphoserine is present on residues Ser511, Ser523, and Ser525. Residues 511–524 (SPRSLQRLSSQRSP) are compositionally biased toward low complexity. The segment covering 528 to 541 (PNHTCSSNASTATV) has biased composition (polar residues). Residues 617–643 (QATLREQRILFLRQQIKELEKLKNQNS) adopt a coiled-coil conformation.

Interacts (via coiled coil domain) with RNF20, RNF40 and UBE2A. Interacts (via WW domain) with RNA polymerase II. Interacts with MTOR and other components of the MTOR pathway including RPTOR, RUVBL1, RUVBL2, TTI1 and TTI2. Post-translationally, phosphorylated on tyrosine residues.

It is found in the nucleus speckle. The protein resides in the nucleus. In terms of biological role, acts as a linker between gene transcription and histone H2B monoubiquitination at 'Lys-120' (H2BK120ub1). Interacts with the RNA polymerase II transcriptional machinery via its WW domain and with RNF20-RNF40 via its coiled coil region, thereby linking and regulating H2BK120ub1 and gene transcription. Regulates the cell-cycle checkpoint activation in response to DNA damage. Positive regulator of amino acid starvation-induced autophagy. Also acts as a negative regulator of basal autophagy. Positively regulates MTOR activity by promoting, in an energy-dependent manner, the assembly of the TTT complex composed of TELO2, TTI1 and TTI2 and the RUVBL complex composed of RUVBL1 and RUVBL2 into the TTT-RUVBL complex. This leads to the dimerization of the mTORC1 complex and its subsequent activation. May negatively regulate the ubiquitin proteasome pathway. This Mus musculus (Mouse) protein is WW domain-containing adapter protein with coiled-coil (Wac).